A 263-amino-acid polypeptide reads, in one-letter code: Shikimate dehydrogenase (NADP(+)) (263 aa).

Shikimate is bound by residues 16–18 (SKS) and T65. K69 (proton acceptor) is an active-site residue. Shikimate-binding residues include N90 and D105. NADP(+) is bound by residues 125–129 (GSGGS) and L208. A shikimate-binding site is contributed by Y210. G230 provides a ligand contact to NADP(+).

The protein belongs to the shikimate dehydrogenase family. As to quaternary structure, homodimer.

The catalysed reaction is shikimate + NADP(+) = 3-dehydroshikimate + NADPH + H(+). Its pathway is metabolic intermediate biosynthesis; chorismate biosynthesis; chorismate from D-erythrose 4-phosphate and phosphoenolpyruvate: step 4/7. With respect to regulation, inhibited by curcumin, 3-(2-naphthyloxy)-4-oxo-2-(trifluoromethyl)-4H-chromen-7-yl 3-chlorobenzoate, butyl 2-{[3-(2-naphthyloxy)-4-oxo-2-(trifluoromethyl)-4H-chromen-7-yl]oxy}propanoate, 2-({2-[(2-{[2-(2,3-dimethylanilino)-2-oxoethyl]sulfanyl}-1,3-benzothiazol-6-yl)amino]-2-oxoethyl}sulfanyl)-N-(2-naphthyl)acetamide, and maesaquinone diacetate. Functionally, involved in the biosynthesis of the chorismate, which leads to the biosynthesis of aromatic amino acids. Catalyzes the reversible NADPH linked reduction of 3-dehydroshikimate (DHSA) to yield shikimate (SA). It can also use NAD to oxidize shikimate. This chain is Shikimate dehydrogenase (NADP(+)), found in Helicobacter pylori (Campylobacter pylori).